A 562-amino-acid chain; its full sequence is NAD-dependent malic enzyme (562 aa).

Residue Tyr-101 is the Proton donor of the active site. Arg-154 contacts NAD(+). Lys-172 functions as the Proton acceptor in the catalytic mechanism. A divalent metal cation contacts are provided by Glu-243, Asp-244, and Asp-267. 2 residues coordinate NAD(+): Asp-267 and Asn-415.

The protein belongs to the malic enzymes family. As to quaternary structure, homotetramer. Mg(2+) serves as cofactor. Requires Mn(2+) as cofactor.

The enzyme catalyses (S)-malate + NAD(+) = pyruvate + CO2 + NADH. The catalysed reaction is oxaloacetate + H(+) = pyruvate + CO2. The polypeptide is NAD-dependent malic enzyme (Shewanella denitrificans (strain OS217 / ATCC BAA-1090 / DSM 15013)).